A 233-amino-acid chain; its full sequence is Attacin-B (233 aa).

A signal peptide spans 1–17; it reads MFAKLFLVSVLLVGVNS. The propeptide occupies 18–46; that stretch reads RYVLVEEPGYYDKQYEEQPQQWVNSRVRR.

The protein belongs to the attacin/sarcotoxin-2 family.

It is found in the secreted. In terms of biological role, hemolymph antibacterial protein. This chain is Attacin-B, found in Hyalophora cecropia (Cecropia moth).